We begin with the raw amino-acid sequence, 203 residues long: MGSRDHLFKVLVVGDAAVGKTSLVQRYSQDSFSKHYKSTVGVDFALKVLQWSDYEIVRLQLWDIAGQERFTSMTRLYYRDASACVIMFDVTNATTFSNSQRWKQDLDSKLTLPNGEPVPCLLLANKCDLSPWAVSRDQIDRFSKENGFTGWTETSVKENKNINEAMRVLIEKMMRNSTEDIMSLSTQGDYINLQTKSSSWSCC.

Residues Ser-33, Lys-34, His-35, Tyr-36, Lys-37, and Thr-39 each contribute to the GTP site. The Effector region motif lies at 36–44; sequence YKSTVGVDF. Residue Thr-71 is modified to Phosphothreonine; by LRRK2. Ser-72 is subject to Phosphoserine; by LRRK2. GTP contacts are provided by Lys-126, Val-156, and Lys-157. Residues Cys-202 and Cys-203 are each lipidated (S-geranylgeranyl cysteine).

This sequence belongs to the small GTPase superfamily. Rab family. Interacts with LRRK2 (via the N-terminus); this interaction is direct and stimulates kinase activity. In case of Salmonella enterica serovar Typhimurium (S.typhimurium) infection, is proteolytically cleaved between Gly-41 and Val-42 by the GtgE viral protease encoded on the Gifsy-2 lysogen bacteriophage, which therefore prevents the recruitment of RAB29 to S.typhimurium-containing vacuoles. In contrast, no proteolytically cleavage is detected in S.typhi-infected cells. In terms of tissue distribution, ubiquitous.

The protein resides in the cell membrane. Its subcellular location is the cytoplasm. It is found in the perinuclear region. It localises to the golgi apparatus. The protein localises to the golgi apparatus membrane. The protein resides in the trans-Golgi network. Its subcellular location is the vacuole. It is found in the cytoskeleton. In terms of biological role, the small GTPases Rab are key regulators in vesicle trafficking. Essential for maintaining the integrity of the endosome-trans-Golgi network structure. Together with LRRK2, plays a role in the retrograde trafficking pathway for recycling proteins, such as mannose 6 phosphate receptor (M6PR), between lysosomes and the Golgi apparatus in a retromer-dependent manner. Recruits LRRK2 to the Golgi complex and stimulates LRRK2 kinase activity. Stimulates phosphorylation of RAB10 'Thr-73' by LRRK2. Regulates neuronal process morphology in the intact central nervous system (CNS). May play a role in the formation of typhoid toxin transport intermediates during Salmonella enterica serovar Typhi (S.typhi) epithelial cell infection. The chain is Ras-related protein Rab-7L1 (RAB29) from Homo sapiens (Human).